The primary structure comprises 160 residues: Large ribosomal subunit protein bL17 (160 aa).

A compositionally biased stretch (basic and acidic residues) spans 123 to 141; sequence DEKRQKRAEARAKRREEMQ. Residues 123–160 form a disordered region; it reads DEKRQKRAEARAKRREEMQKAMAEQQQAEGGEPEGGNE. A compositionally biased stretch (low complexity) spans 142–152; sequence KAMAEQQQAEG.

It belongs to the bacterial ribosomal protein bL17 family. As to quaternary structure, part of the 50S ribosomal subunit. Contacts protein L32.

In Acidobacterium capsulatum (strain ATCC 51196 / DSM 11244 / BCRC 80197 / JCM 7670 / NBRC 15755 / NCIMB 13165 / 161), this protein is Large ribosomal subunit protein bL17.